Reading from the N-terminus, the 329-residue chain is uncharacterized protein (329 aa).

Helical transmembrane passes span 13–35 (IPVLIISLITLVASAYALYWATI) and 229–248 (VIPAALCTVSIIFAGLSVVY).

Its subcellular location is the cell membrane. This is an uncharacterized protein from Archaeoglobus fulgidus (strain ATCC 49558 / DSM 4304 / JCM 9628 / NBRC 100126 / VC-16).